We begin with the raw amino-acid sequence, 512 residues long: Maturase K (512 aa).

Belongs to the intron maturase 2 family. MatK subfamily.

Its subcellular location is the plastid. It is found in the chloroplast. Functionally, usually encoded in the trnK tRNA gene intron. Probably assists in splicing its own and other chloroplast group II introns. This Oenothera parviflora (Small-flowered evening primrose) protein is Maturase K.